The primary structure comprises 432 residues: Keratin, type I cytoskeletal 17 (432 aa).

The segment at 1–24 (MTTTIRQFTSSSSIKGSSGLGGGS) is disordered. The head stretch occupies residues 1–83 (MTTTIRQFTS…GGVDGLLAGG (83 aa)). Phosphoserine is present on residues serine 12 and serine 13. A Glycyl lysine isopeptide (Lys-Gly) (interchain with G-Cter in SUMO1); alternate cross-link involves residue lysine 15. A Glycyl lysine isopeptide (Lys-Gly) (interchain with G-Cter in SUMO2); alternate cross-link involves residue lysine 15. 3 positions are modified to phosphoserine: serine 25, serine 32, and serine 39. Serine 44 is subject to Phosphoserine; by RPS6KA1. The interval 84 to 120 (EKATMQNLNDRLASYLDKVRALEEANTELEVKIRDWY) is coil 1A. Positions 84-395 (EKATMQNLND…RLLEGEDAHL (312 aa)) constitute an IF rod domain. Threonine 110 carries the phosphothreonine modification. The linker 1 stretch occupies residues 121–138 (QRQAPGPARDYSQYYRTI). Positions 139–230 (EELQNKILTA…NHEEEMNALR (92 aa)) are coil 1B. The segment at 231–250 (GQVGGEINVEMDAAPGVDLS) is linker 12. The interval 251–392 (RILNEMRDQY…TYRRLLEGED (142 aa)) is coil 2. Residue lysine 278 forms a Glycyl lysine isopeptide (Lys-Gly) (interchain with G-Cter in SUMO2) linkage. Threonine 279 bears the Phosphothreonine mark. Serine 323 bears the Phosphoserine mark. The tail stretch occupies residues 393–432 (AHLTQYKKEPVTTRQVRTIVEEVQDGKVISSREQVHQTTR). Glycyl lysine isopeptide (Lys-Gly) (interchain with G-Cter in SUMO1); alternate cross-links involve residues lysine 399, lysine 400, and lysine 419. Residues lysine 399, lysine 400, and lysine 419 each participate in a glycyl lysine isopeptide (Lys-Gly) (interchain with G-Cter in SUMO2); alternate cross-link.

It belongs to the intermediate filament family. Heterodimer of a type I and a type II keratin. KRT17 associates with KRT6 isomers (KRT6A or KRT6B). Interacts with TRADD and SFN. Post-translationally, phosphorylation at Ser-44 occurs in a growth- and stress-dependent fashion in skin keratinocytes, it has no effect on filament organization.

The protein resides in the cytoplasm. Functionally, type I keratin involved in the formation and maintenance of various skin appendages, specifically in determining shape and orientation of hair. Required for the correct growth of hair follicles, in particular for the persistence of the anagen (growth) state. Modulates the function of TNF-alpha in the specific context of hair cycling. Regulates protein synthesis and epithelial cell growth through binding to the adapter protein SFN and by stimulating Akt/mTOR pathway. Involved in tissue repair. May be a marker of basal cell differentiation in complex epithelia and therefore indicative of a certain type of epithelial 'stem cells'. Acts as a promoter of epithelial proliferation by acting a regulator of immune response in skin: promotes Th1/Th17-dominated immune environment contributing to the development of basaloid skin tumors. May act as an autoantigen in the immunopathogenesis of psoriasis, with certain peptide regions being a major target for autoreactive T-cells and hence causing their proliferation. This chain is Keratin, type I cytoskeletal 17, found in Pan troglodytes (Chimpanzee).